The primary structure comprises 115 residues: NAD(P)H-quinone oxidoreductase subunit M (115 aa).

This sequence belongs to the complex I NdhM subunit family. As to quaternary structure, NDH-1 can be composed of about 15 different subunits; different subcomplexes with different compositions have been identified which probably have different functions.

The protein resides in the cellular thylakoid membrane. The enzyme catalyses a plastoquinone + NADH + (n+1) H(+)(in) = a plastoquinol + NAD(+) + n H(+)(out). It catalyses the reaction a plastoquinone + NADPH + (n+1) H(+)(in) = a plastoquinol + NADP(+) + n H(+)(out). In terms of biological role, NDH-1 shuttles electrons from an unknown electron donor, via FMN and iron-sulfur (Fe-S) centers, to quinones in the respiratory and/or the photosynthetic chain. The immediate electron acceptor for the enzyme in this species is believed to be plastoquinone. Couples the redox reaction to proton translocation, and thus conserves the redox energy in a proton gradient. Cyanobacterial NDH-1 also plays a role in inorganic carbon-concentration. This Prochlorococcus marinus (strain MIT 9215) protein is NAD(P)H-quinone oxidoreductase subunit M.